Here is a 363-residue protein sequence, read N- to C-terminus: Ribosome-binding ATPase YchF (363 aa).

The region spanning 3–257 (FKCGFVGLPN…VSAYDHLSLK (255 aa)) is the OBG-type G domain. Residue 12–17 (NVGKST) coordinates ATP. Mg(2+) is bound by residues Ser-16 and Thr-36. The TGS domain occupies 278-361 (NLITFFTAGK…CDGDIIHVLY (84 aa)).

Belongs to the TRAFAC class OBG-HflX-like GTPase superfamily. OBG GTPase family. YchF/OLA1 subfamily. It depends on Mg(2+) as a cofactor.

Functionally, ATPase that binds to both the 70S ribosome and the 50S ribosomal subunit in a nucleotide-independent manner. This Buchnera aphidicola subsp. Baizongia pistaciae (strain Bp) protein is Ribosome-binding ATPase YchF.